A 446-amino-acid polypeptide reads, in one-letter code: Exopolygalacturonase (446 aa).

The signal sequence occupies residues 1-17 (MRVTDIISCALLQASIA). Residues Asn-53, Asn-118, Asn-134, and Asn-204 are each glycosylated (N-linked (GlcNAc...) asparagine). The stretch at 236 to 257 (SDNIIIQNSNINNGDDCVSFKP) is one PbH1 1 repeat. Asp-250 serves as the catalytic Proton donor. A disulfide bond links Cys-252 and Cys-269. Residues Asn-258 and Asn-270 are each glycosylated (N-linked (GlcNAc...) asparagine). PbH1 repeat units lie at residues 259–279 (STNILVQNLVCNGSHGISVGS), 290–311 (VENILVRNISMSNASDGARIKV), and 332–353 (VRNVTYDGMIVKNVDYAIEITQ). Residue His-273 is part of the active site. N-linked (GlcNAc...) asparagine glycans are attached at residues Asn-297, Asn-302, Asn-334, Asn-359, and Asn-369. PbH1 repeat units lie at residues 367–398 (PSNLTISDITIKNFKGTTSKKYDPRVGYVVCS) and 403–434 (CSDISIENIDVKSPSGTNLFTCANAEGIQSQV). 2 disulfide bridges follow: Cys-397-Cys-403 and Cys-424-Cys-436. The N-linked (GlcNAc...) asparagine glycan is linked to Asn-435.

This sequence belongs to the glycosyl hydrolase 28 family.

It is found in the secreted. It catalyses the reaction [(1-&gt;4)-alpha-D-galacturonosyl](n) + H2O = alpha-D-galacturonate + [(1-&gt;4)-alpha-D-galacturonosyl](n-1). Its function is as follows. Hydrolysis of 1,4-alpha-D-galactosiduronic linkages in pectate and other galacturonans. This is Exopolygalacturonase (PGX1) from Cochliobolus carbonum (Maize leaf spot fungus).